A 350-amino-acid polypeptide reads, in one-letter code: Probable choline kinase 2 (350 aa).

The ATP site is built by Arg73, Gln210, and Asp227.

It belongs to the choline/ethanolamine kinase family.

The enzyme catalyses choline + ATP = phosphocholine + ADP + H(+). It participates in phospholipid metabolism; phosphatidylcholine biosynthesis; phosphocholine from choline: step 1/1. In terms of biological role, involved in phospholipid biosynthesis. Catalyzes the first step in phosphatidylcholine biosynthesis. The chain is Probable choline kinase 2 from Arabidopsis thaliana (Mouse-ear cress).